The following is a 263-amino-acid chain: MKLKSFGVFGNPIKHSKSPLIHNACFLTFQKKLGFLGHYHPILLPLESHIKNEFLHLGLSGANVTLPFKERAFQICDKIKGIALECGAVNTLVLENDELVGYNTDALGFYLSLKQKNYQNALILGSGGSAKALACELKKQGLEVSVLNRSARGLDFFQRLGCDCFMEPPKSAFDLIINATSASLNNELPLNKEVLKGYFKEGQLAYDLAYGFLTPFLSLAKELEIPFQDGKDMLIYQAALSFEKFSASQIPYSKAFEVMRSVF.

Shikimate-binding positions include 16 to 18 (SKS) and threonine 65. The active-site Proton acceptor is lysine 69. Residues asparagine 90 and aspartate 105 each contribute to the shikimate site. Residues 125 to 129 (GSGGS) and leucine 208 each bind NADP(+). Residue tyrosine 210 coordinates shikimate. Glycine 230 contacts NADP(+).

It belongs to the shikimate dehydrogenase family. As to quaternary structure, homodimer.

It carries out the reaction shikimate + NADP(+) = 3-dehydroshikimate + NADPH + H(+). It functions in the pathway metabolic intermediate biosynthesis; chorismate biosynthesis; chorismate from D-erythrose 4-phosphate and phosphoenolpyruvate: step 4/7. Functionally, involved in the biosynthesis of the chorismate, which leads to the biosynthesis of aromatic amino acids. Catalyzes the reversible NADPH linked reduction of 3-dehydroshikimate (DHSA) to yield shikimate (SA). The protein is Shikimate dehydrogenase (NADP(+)) of Helicobacter pylori (strain P12).